A 484-amino-acid chain; its full sequence is Cysteine--tRNA ligase (484 aa).

Cys-27 is a Zn(2+) binding site. A 'HIGH' region motif is present at residues 29–39 (PTTYNYIHLGN). The Zn(2+) site is built by Cys-207, His-232, and Glu-236. Residues 264–268 (KMSKS) carry the 'KMSKS' region motif. Position 267 (Lys-267) interacts with ATP.

This sequence belongs to the class-I aminoacyl-tRNA synthetase family. Monomer. It depends on Zn(2+) as a cofactor.

It localises to the cytoplasm. The enzyme catalyses tRNA(Cys) + L-cysteine + ATP = L-cysteinyl-tRNA(Cys) + AMP + diphosphate. The sequence is that of Cysteine--tRNA ligase from Pelotomaculum thermopropionicum (strain DSM 13744 / JCM 10971 / SI).